A 238-amino-acid polypeptide reads, in one-letter code: Uridylate kinase (238 aa).

12–15 (KLSG) lines the ATP pocket. The involved in allosteric activation by GTP stretch occupies residues 20–25 (GQQGFG). A UMP-binding site is contributed by Gly54. ATP is bound by residues Gly55 and Arg59. Residues Asp74 and 135-142 (TGNPFFTT) contribute to the UMP site. 4 residues coordinate ATP: Thr162, Asn163, Tyr168, and Asp171.

Belongs to the UMP kinase family. As to quaternary structure, homohexamer.

The protein resides in the cytoplasm. The enzyme catalyses UMP + ATP = UDP + ADP. The protein operates within pyrimidine metabolism; CTP biosynthesis via de novo pathway; UDP from UMP (UMPK route): step 1/1. With respect to regulation, allosterically activated by GTP. Inhibited by UTP. Functionally, catalyzes the reversible phosphorylation of UMP to UDP. This Bradyrhizobium diazoefficiens (strain JCM 10833 / BCRC 13528 / IAM 13628 / NBRC 14792 / USDA 110) protein is Uridylate kinase.